The following is a 74-amino-acid chain: MDLSVKSEENVEYMVEAIKEKLRMVNAGAMRAASFNEEMYEDLRDIYDHVMKRETFSISEMQAITEELGTLIKK.

The protein belongs to the UPF0435 family.

The sequence is that of UPF0435 protein BCB4264_A0471 from Bacillus cereus (strain B4264).